The following is a 396-amino-acid chain: Elongation factor Tu (396 aa).

The tr-type G domain maps to 10–206 (KPHVNIGTIG…AVDESVPDPV (197 aa)). Residues 19–26 (GHVDHGKT) form a G1 region. 19-26 (GHVDHGKT) provides a ligand contact to GTP. Position 26 (Thr-26) interacts with Mg(2+). The tract at residues 62–66 (GITIN) is G2. The segment at 83–86 (DAPG) is G3. GTP-binding positions include 83-87 (DAPGH) and 138-141 (NKSD). The tract at residues 138–141 (NKSD) is G4. The tract at residues 176–178 (SGL) is G5.

The protein belongs to the TRAFAC class translation factor GTPase superfamily. Classic translation factor GTPase family. EF-Tu/EF-1A subfamily. Monomer.

Its subcellular location is the cytoplasm. It carries out the reaction GTP + H2O = GDP + phosphate + H(+). Functionally, GTP hydrolase that promotes the GTP-dependent binding of aminoacyl-tRNA to the A-site of ribosomes during protein biosynthesis. This is Elongation factor Tu from Paenarthrobacter aurescens (strain TC1).